The following is a 216-amino-acid chain: Large ribosomal subunit protein uL3 (216 aa).

Gln157 bears the N5-methylglutamine mark.

This sequence belongs to the universal ribosomal protein uL3 family. As to quaternary structure, part of the 50S ribosomal subunit. Forms a cluster with proteins L14 and L19. In terms of processing, methylated by PrmB.

Its function is as follows. One of the primary rRNA binding proteins, it binds directly near the 3'-end of the 23S rRNA, where it nucleates assembly of the 50S subunit. In Xanthomonas oryzae pv. oryzae (strain MAFF 311018), this protein is Large ribosomal subunit protein uL3.